Reading from the N-terminus, the 506-residue chain is Kynureninase 1 (506 aa).

Residues Leu141, Thr142, 169-172, Asp254, His257, and Tyr279 contribute to the pyridoxal 5'-phosphate site; that span reads FPSD. The residue at position 280 (Lys280) is an N6-(pyridoxal phosphate)lysine. Residues 303–319 are compositionally biased toward low complexity; that stretch reads ETAPTTTPDGTNGNPKT. Residues 303-322 form a disordered region; that stretch reads ETAPTTTPDGTNGNPKTISD. Residues Trp334 and Asn362 each contribute to the pyridoxal 5'-phosphate site.

The protein belongs to the kynureninase family. As to quaternary structure, homodimer. Pyridoxal 5'-phosphate serves as cofactor.

The protein localises to the cytoplasm. It carries out the reaction L-kynurenine + H2O = anthranilate + L-alanine + H(+). The enzyme catalyses 3-hydroxy-L-kynurenine + H2O = 3-hydroxyanthranilate + L-alanine + H(+). It participates in amino-acid degradation; L-kynurenine degradation; L-alanine and anthranilate from L-kynurenine: step 1/1. It functions in the pathway cofactor biosynthesis; NAD(+) biosynthesis; quinolinate from L-kynurenine: step 2/3. Catalyzes the cleavage of L-kynurenine (L-Kyn) and L-3-hydroxykynurenine (L-3OHKyn) into anthranilic acid (AA) and 3-hydroxyanthranilic acid (3-OHAA), respectively. This chain is Kynureninase 1, found in Phaeosphaeria nodorum (strain SN15 / ATCC MYA-4574 / FGSC 10173) (Glume blotch fungus).